Here is a 742-residue protein sequence, read N- to C-terminus: 5-methyltetrahydropteroyltriglutamate--homocysteine methyltransferase (742 aa).

5-methyltetrahydropteroyltri-L-glutamate-binding positions include 18–21 (REWK) and lysine 112. Residues 420–422 (IGS) and glutamate 473 contribute to the L-homocysteine site. L-methionine contacts are provided by residues 420 to 422 (IGS) and glutamate 473. Tryptophan 550 provides a ligand contact to 5-methyltetrahydropteroyltri-L-glutamate. Aspartate 588 serves as a coordination point for L-homocysteine. Aspartate 588 is an L-methionine binding site. Glutamate 594 is a binding site for 5-methyltetrahydropteroyltri-L-glutamate. Histidine 630, cysteine 632, and glutamate 654 together coordinate Zn(2+). Catalysis depends on histidine 683, which acts as the Proton donor. Cysteine 715 is a Zn(2+) binding site.

It belongs to the vitamin-B12 independent methionine synthase family. Requires Zn(2+) as cofactor.

The enzyme catalyses 5-methyltetrahydropteroyltri-L-glutamate + L-homocysteine = tetrahydropteroyltri-L-glutamate + L-methionine. It functions in the pathway amino-acid biosynthesis; L-methionine biosynthesis via de novo pathway; L-methionine from L-homocysteine (MetE route): step 1/1. In terms of biological role, catalyzes the transfer of a methyl group from 5-methyltetrahydrofolate to homocysteine resulting in methionine formation. In Staphylococcus aureus (strain JH9), this protein is 5-methyltetrahydropteroyltriglutamate--homocysteine methyltransferase.